Here is a 1033-residue protein sequence, read N- to C-terminus: Probable beta-glucosidase E (1033 aa).

The disordered stretch occupies residues 1 to 71 (MAPPDSTHGG…RSGSYKLRPV (71 aa)). Over 1–161 (MAPPDSTHGG…PVKYARIWWR (161 aa)) the chain is Cytoplasmic. 2 stretches are compositionally biased toward basic and acidic residues: residues 11–20 (SFRDHLKTND) and 59–71 (DLER…LRPV). A helical; Signal-anchor for type II membrane protein transmembrane segment spans residues 162–182 (TLLAVVVTLVVVVWGFLSFAV). The Extracellular portion of the chain corresponds to 183–1033 (SHREEPTVWP…SRDLPLMGEY (851 aa)). Residues N224, N232, and N418 are each glycosylated (N-linked (GlcNAc...) asparagine). D446 is a catalytic residue. N-linked (GlcNAc...) asparagine glycosylation is found at N489, N528, N593, N909, N918, and N976.

It belongs to the glycosyl hydrolase 3 family.

It localises to the cell membrane. It carries out the reaction Hydrolysis of terminal, non-reducing beta-D-glucosyl residues with release of beta-D-glucose.. The protein operates within glycan metabolism; cellulose degradation. Beta-glucosidases are one of a number of cellulolytic enzymes involved in the degradation of cellulosic biomass. Catalyzes the last step releasing glucose from the inhibitory cellobiose. This Aspergillus fumigatus (strain CBS 144.89 / FGSC A1163 / CEA10) (Neosartorya fumigata) protein is Probable beta-glucosidase E (bglE).